We begin with the raw amino-acid sequence, 81 residues long: Large ribosomal subunit protein bL27 (81 aa).

The interval 1 to 22 (MAHKKGQGSSRNGRDSNAQRRG) is disordered.

The protein belongs to the bacterial ribosomal protein bL27 family.

The polypeptide is Large ribosomal subunit protein bL27 (Rhodopirellula baltica (strain DSM 10527 / NCIMB 13988 / SH1)).